Consider the following 233-residue polypeptide: Large ribosomal subunit protein uL1 (233 aa).

It belongs to the universal ribosomal protein uL1 family. As to quaternary structure, part of the 50S ribosomal subunit.

In terms of biological role, binds directly to 23S rRNA. The L1 stalk is quite mobile in the ribosome, and is involved in E site tRNA release. Protein L1 is also a translational repressor protein, it controls the translation of the L11 operon by binding to its mRNA. This is Large ribosomal subunit protein uL1 from Pelobacter propionicus (strain DSM 2379 / NBRC 103807 / OttBd1).